Here is a 113-residue protein sequence, read N- to C-terminus: UPF0482 protein YnfB (113 aa).

Residues 1 to 28 form the signal peptide; that stretch reads MKITLSKRIGLLAILLPCALALSTTVHA.

The protein belongs to the UPF0482 family.

In Escherichia coli O8 (strain IAI1), this protein is UPF0482 protein YnfB.